Consider the following 162-residue polypeptide: ATP synthase subunit delta, mitochondrial (162 aa).

A mitochondrion-targeting transit peptide spans 1–25 (MSSLRLLASAARRATTHVAYTRRGY).

It belongs to the ATPase epsilon chain family. F-type ATPases have 2 components, CF(1) - the catalytic core - and CF(0) - the membrane proton channel. CF(1) has five subunits: alpha(3), beta(3), gamma(1), delta(1), epsilon(1). CF(0) has three main subunits: a, b and c.

It localises to the mitochondrion. The protein localises to the mitochondrion inner membrane. Mitochondrial membrane ATP synthase (F(1)F(0) ATP synthase or Complex V) produces ATP from ADP in the presence of a proton gradient across the membrane which is generated by electron transport complexes of the respiratory chain. F-type ATPases consist of two structural domains, F(1) - containing the extramembraneous catalytic core, and F(0) - containing the membrane proton channel, linked together by a central stalk and a peripheral stalk. During catalysis, ATP turnover in the catalytic domain of F(1) is coupled via a rotary mechanism of the central stalk subunits to proton translocation. Part of the complex F(1) domain and of the central stalk which is part of the complex rotary element. Rotation of the central stalk against the surrounding alpha(3)beta(3) subunits leads to hydrolysis of ATP in three separate catalytic sites on the beta subunits. This is ATP synthase subunit delta, mitochondrial (atpD) from Agaricus bisporus (White button mushroom).